A 125-amino-acid chain; its full sequence is MAIVAVGTEIVQCARIAQMIQQHGEQFLERVFTAAEIDHCAQRPDATGHFSRRWAAKQAVFKALRCHRRGVSWTDIEIATHPSEGPTIELHGIAADLAEEAEIDAIHLSLGGCRTQAIAYVVLCD.

Mg(2+)-binding residues include Glu-9 and Gln-58.

This sequence belongs to the P-Pant transferase superfamily. AcpS family. The cofactor is Mg(2+).

It localises to the cytoplasm. It catalyses the reaction apo-[ACP] + CoA = holo-[ACP] + adenosine 3',5'-bisphosphate + H(+). In terms of biological role, transfers the 4'-phosphopantetheine moiety from coenzyme A to a Ser of acyl-carrier-protein. The sequence is that of Holo-[acyl-carrier-protein] synthase from Rhodopirellula baltica (strain DSM 10527 / NCIMB 13988 / SH1).